A 75-amino-acid chain; its full sequence is uncharacterized protein (75 aa).

It is found in the plastid. It localises to the chloroplast. This is an uncharacterized protein from Calycanthus floridus var. glaucus (Eastern sweetshrub).